The following is a 462-amino-acid chain: Histidine--tRNA ligase (462 aa).

The protein belongs to the class-II aminoacyl-tRNA synthetase family. In terms of assembly, homodimer.

The protein resides in the cytoplasm. The enzyme catalyses tRNA(His) + L-histidine + ATP = L-histidyl-tRNA(His) + AMP + diphosphate + H(+). In Trichormus variabilis (strain ATCC 29413 / PCC 7937) (Anabaena variabilis), this protein is Histidine--tRNA ligase.